The following is a 205-amino-acid chain: Small ribosomal subunit protein uS4c (205 aa).

The segment at 22-42 is disordered; that stretch reads TSKISKKTNTPGEHGQPQNKL. A compositionally biased stretch (polar residues) spans 28–42; the sequence is KTNTPGEHGQPQNKL. The 64-residue stretch at 94 to 157 folds into the S4 RNA-binding domain; the sequence is MRLDNIVYRL…ASRDLVKKFV (64 aa).

The protein belongs to the universal ribosomal protein uS4 family. As to quaternary structure, part of the 30S ribosomal subunit. Contacts protein S5. The interaction surface between S4 and S5 is involved in control of translational fidelity.

It is found in the plastid. It localises to the chloroplast. One of the primary rRNA binding proteins, it binds directly to 16S rRNA where it nucleates assembly of the body of the 30S subunit. In terms of biological role, with S5 and S12 plays an important role in translational accuracy. This is Small ribosomal subunit protein uS4c (rps4) from Tupiella akineta (Green alga).